The chain runs to 290 residues: Hydroxyacylglutathione hydrolase-like protein (290 aa).

Zn(2+) contacts are provided by His-54, His-56, Asp-58, His-59, His-110, Asp-134, and His-172.

The protein belongs to the metallo-beta-lactamase superfamily. Glyoxalase II family. Requires Zn(2+) as cofactor.

Functionally, hydrolase acting on ester bonds. This chain is Hydroxyacylglutathione hydrolase-like protein (HAGHL), found in Homo sapiens (Human).